Consider the following 149-residue polypeptide: Macrodomain Ter protein (149 aa).

This sequence belongs to the MatP family. As to quaternary structure, homodimer.

It is found in the cytoplasm. Functionally, required for spatial organization of the terminus region of the chromosome (Ter macrodomain) during the cell cycle. Prevents early segregation of duplicated Ter macrodomains during cell division. Binds specifically to matS, which is a 13 bp signature motif repeated within the Ter macrodomain. The protein is Macrodomain Ter protein of Vibrio cholerae serotype O1 (strain ATCC 39315 / El Tor Inaba N16961).